Reading from the N-terminus, the 297-residue chain is MRPALFDYRHLASGKVREIYRIDDEHLLMVASDRISAFDYVLDSTIPDKGRILTAMSVFFFSFVDAPNHLAGPPDDPRIPEEVLGRALVVRQLDMLPMECVARGYLTGSGLLDYQATGKVCGIPLPPGLVEASRFAAPLFTPAMKAVLGEHDENISFSRMIEMVGVVRANQLRDRTLQIYLQAADHALKTGIIIADTKFEFGIDRDGNLLLADEIFTPDSSRYWSVDDYRVGVVQRSFDKQFVRNWLVSPESGWVRAGALSPPSLPDDIIEATRLCYVEVYERISGMSFDDWIGPGA.

This sequence belongs to the SAICAR synthetase family.

It catalyses the reaction 5-amino-1-(5-phospho-D-ribosyl)imidazole-4-carboxylate + L-aspartate + ATP = (2S)-2-[5-amino-1-(5-phospho-beta-D-ribosyl)imidazole-4-carboxamido]succinate + ADP + phosphate + 2 H(+). Its pathway is purine metabolism; IMP biosynthesis via de novo pathway; 5-amino-1-(5-phospho-D-ribosyl)imidazole-4-carboxamide from 5-amino-1-(5-phospho-D-ribosyl)imidazole-4-carboxylate: step 1/2. The sequence is that of Phosphoribosylaminoimidazole-succinocarboxamide synthase (purC) from Mycobacterium leprae (strain TN).